A 286-amino-acid chain; its full sequence is MKNILSIQSHVVFGHAGNSAAEFPMRRMGANVWPLNTVQFSNHTQYGHWTGCVMPASHLTEVVQGIANIDKLKTCNAVLSGYIGSAEQGEHILGIVRQVKAANPDALYFCDPVMGTPEKGCIVAPGVSDFHCQQSLLAADIVAPNLPELELLGGRTVHNVAEAVETARALCEKGPKIVLVKHLSRAASREDSFEMLLVTPTDAWHISRPLVEFERQPVGVGDLTSGLLLVNLLKGVALDKALEHTTAAVYEVMLVTKEMNEYELQLVAAQDGIANPRHHFQAVRLS.

Residues serine 9 and 44–45 (TQ) each bind substrate. Residues aspartate 111, alanine 143, glutamate 148, lysine 181, and 208-211 (RPLV) contribute to the ATP site. Residue aspartate 222 coordinates substrate.

This sequence belongs to the pyridoxine kinase family. PdxY subfamily. Homodimer. The cofactor is Mg(2+).

The enzyme catalyses pyridoxal + ATP = pyridoxal 5'-phosphate + ADP + H(+). The protein operates within cofactor metabolism; pyridoxal 5'-phosphate salvage; pyridoxal 5'-phosphate from pyridoxal: step 1/1. Functionally, pyridoxal kinase involved in the salvage pathway of pyridoxal 5'-phosphate (PLP). Catalyzes the phosphorylation of pyridoxal to PLP. The protein is Pyridoxal kinase PdxY of Pectobacterium atrosepticum (strain SCRI 1043 / ATCC BAA-672) (Erwinia carotovora subsp. atroseptica).